The sequence spans 886 residues: DNA mismatch repair protein MutS (886 aa).

Glycine 627 to serine 634 is a binding site for ATP. Residues valine 834–aspartate 857 form a disordered region.

It belongs to the DNA mismatch repair MutS family.

Its function is as follows. This protein is involved in the repair of mismatches in DNA. It is possible that it carries out the mismatch recognition step. This protein has a weak ATPase activity. In Burkholderia vietnamiensis (strain G4 / LMG 22486) (Burkholderia cepacia (strain R1808)), this protein is DNA mismatch repair protein MutS.